The sequence spans 265 residues: Short-chain dehydrogenase/reductase fsr5 (265 aa).

The signal sequence occupies residues 1-32; that stretch reads MASLGKYVSKLAGSRVLVIGGSSGIGFGVAEA. 5 residues coordinate NADP(+): S22, S23, I25, S45, and K50. N-linked (GlcNAc...) asparagine glycosylation is present at N62. NADP(+) contacts are provided by N88, R130, and T204. Residues N218 and N250 are each glycosylated (N-linked (GlcNAc...) asparagine).

Belongs to the short-chain dehydrogenases/reductases (SDR) family.

In terms of biological role, short-chain dehydrogenase/reductase; part of the gene cluster that mediates the biosynthesis of fusarubins, highly pigmented naphthoquinones responsible for the coloration of the fruiting bodies. The non-reducing polyketide synthase FSR1 is responsible for the condensation of seven acetyl-CoA units to yield a haptaketide. After rings A and B are formed by aldol-type cyclization, the PKS-derived product is released as 6-O-demethylfusarubinaldehyde. Then, two hydroxyl groups at C-5 and C-10 are incorporated by FSR3, and simultaneously hydroxyl groups at C-6 and C-8 are methylated by FSR2. The aldehyde is, on the one hand, reduced by FSR3 to 8-O-methylfusarubin alcohol, which equilibrates mainly with 8-O-methylfusarubin and only small amounts of 8-O-methylnectriafurone. On the other hand, the aldehyde can be oxidized to form 8-O-methylfusarubinic acid, a reaction driven by FSR3 equilibrating with 8-O-methylfusarubinlactone, finally resulting in 8-O-methylanhydrofusarubinlactol after a further reduction step and loss of water. 8-O-Methylfusarubinic acid can also undergo decarboxylation, resulting in 8-O-methyl-13-hydroxynorjavanicin after another hydroxylation step at C-13. Both steps are most likely also accomplished by FSR3. No enzymatic function has been determined so far for either FSR4 and FSR5. Their deletion does not alter the product spectrum, but the possibility that they catalyze specific enzymatic steps during perithecium development cannot be ruled out. FSR4 might possess a regulatory function in the biosynthesis of fusarubins. In Gibberella fujikuroi (strain CBS 195.34 / IMI 58289 / NRRL A-6831) (Bakanae and foot rot disease fungus), this protein is Short-chain dehydrogenase/reductase fsr5.